The primary structure comprises 335 residues: MQTSQLFTALQQRQRQRDYRYLTGLVVMLLFALLISLCAGDVWIWPEHWFSESGKLFVWQLRLPRSMAVIMVGASLAVSGAVMQALFENPLAEPGLLGVANGAGVALVTAVLLGHGLLPIWVLSTCAIIGALLMTSILLSFTRRRLLTNAQLLLVGVALGIICSAMMTWAVYFSTSLDLRQLMYWMMGGFSGVDWRQQSLVLALLPTVIWLCCQGRVLNFMSLGEQQARQLGVSLHLWRNLLVLAIGLLVGISVALAGVISFIGLVIPHILRLTGLTDQRRLLAGCAFAGGGVLLLADVVARTVLSSAELPIGVVTATLGSPLFIWLLIRVKGVK.

A run of 8 helical transmembrane segments spans residues 25–45, 67–87, 94–113, 117–139, 153–173, 243–263, 281–301, and 309–329; these read LVVM…VWIW, MAVI…QALF, PGLL…AVLL, LLPI…SILL, LLVG…AVYF, VLAI…ISFI, RLLA…DVVA, and ELPI…WLLI.

It belongs to the binding-protein-dependent transport system permease family. FecCD subfamily. As to quaternary structure, the complex is composed of two ATP-binding proteins (BtuD), two transmembrane proteins (BtuC) and a solute-binding protein (BtuF).

It is found in the cell inner membrane. Functionally, part of the ABC transporter complex BtuCDF involved in vitamin B12 import. Involved in the translocation of the substrate across the membrane. The chain is Vitamin B12 import system permease protein BtuC from Yersinia pseudotuberculosis serotype O:1b (strain IP 31758).